The following is an 88-amino-acid chain: uncharacterized protein (88 aa).

This sequence to E.coli YihD.

This is an uncharacterized protein from Haemophilus influenzae (strain ATCC 51907 / DSM 11121 / KW20 / Rd).